The chain runs to 807 residues: Probable phosphoketolase (807 aa).

It belongs to the XFP family. The cofactor is thiamine diphosphate.

In Nitrosospira multiformis (strain ATCC 25196 / NCIMB 11849 / C 71), this protein is Probable phosphoketolase.